The primary structure comprises 446 residues: Glucose transporter GlcP (446 aa).

The Cytoplasmic portion of the chain corresponds to 1-6 (MKANKY). The helical transmembrane segment at 7–31 (LIFILGALGGLLYGYDNGVISGALL) threads the bilayer. Topologically, residues 32–38 (FIHKDIP) are extracellular. The helical transmembrane segment at 39-64 (LNSTTEGIVVSSMLIGAIVGAGSSGP) threads the bilayer. Residues 65-70 (LADKLG) are Cytoplasmic-facing. Residues 71–90 (RRRLVMLIAIVFIIGALILA) traverse the membrane as a helical segment. Over 91–94 (ASTN) the chain is Extracellular. The chain crosses the membrane as a helical span at residues 95 to 122 (LALLIIGRLIIGLAVGGSMSTVPVYLSE). The Cytoplasmic portion of the chain corresponds to 123–129 (MAPTEYR). The chain crosses the membrane as a helical span at residues 130 to 152 (GSLGSLNQLMITIGILAAYLVNY). Residues 153–154 (AF) lie on the Extracellular side of the membrane. A helical membrane pass occupies residues 155 to 180 (ADIEGWRWMLGLAVVPSVILLVGIYF). Over 181-234 (MPESPRWLLENRNEEAARQVMKITYDDSEIDKELKEMKEINAISESTWTVIKSP) the chain is Cytoplasmic. Residues 235–269 (WLGRILIVGCIFAIFQQFIGINAVIFYSSSIFAKA) traverse the membrane as a helical segment. Residues 270 to 272 (GLG) are Extracellular-facing. Residues 273–295 (EAASILGSVGIGTINVLVTIVAI) traverse the membrane as a helical segment. Topologically, residues 296-303 (FVVDKIDR) are cytoplasmic. Residues 304–324 (KKLLVGGNIGMIASLLIMAIL) form a helical membrane-spanning segment. At 325–329 (IWTIG) the chain is on the extracellular side. A helical membrane pass occupies residues 330-363 (IASSAWIIIVCLSLFIVFFGISWGPVLWVMLPEL). Topologically, residues 364-370 (FPMRARG) are cytoplasmic. Residues 371–399 (AATGISALVLNIGTLIVSLFFPILSDALS) traverse the membrane as a helical segment. At 400–401 (TE) the chain is on the extracellular side. Residues 402 to 420 (WVFLIFAFIGVLAMIFVIK) form a helical membrane-spanning segment. At 421-446 (FLPETRGRSLEEIEYELRERTGARTE) the chain is on the cytoplasmic side.

It belongs to the major facilitator superfamily. Sugar transporter (TC 2.A.1.1) family.

Its subcellular location is the cell membrane. Inhibited by carbonyl cyanide m-chlorophenylhydrazone (CCCP) and by the human glucose transport inhibitors cytochalasin B, phloretin, and forskolin. In terms of biological role, transporter highly specific for glucose uptake. The protein is Glucose transporter GlcP of Staphylococcus epidermidis (strain ATCC 12228 / FDA PCI 1200).